Here is a 366-residue protein sequence, read N- to C-terminus: Sec-independent protein translocase protein TatC (366 aa).

A run of 7 helical transmembrane segments spans residues 42-62, 70-90, 97-117, 134-154, 179-199, 207-227, and 230-250; these read VLAV…LFTM, HMPA…FIPL, AVFI…APGL, ILFY…VFGF, LFFA…LVIV, LAGF…ILTP, and VLSQ…GLFV. Acidic residues predominate over residues 266–279; it reads EAEESGAADDESDE. The disordered stretch occupies residues 266–366; that stretch reads EAEESGAADD…PSPKKPDSPV (101 aa). Composition is skewed to basic and acidic residues over residues 281-290 and 301-318; these read VSARHAEYEA and DMDK…RLES. Over residues 319–333 the composition is skewed to polar residues; it reads DSSASDDGPESNTAG.

It belongs to the TatC family. As to quaternary structure, the Tat system comprises two distinct complexes: a TatABC complex, containing multiple copies of TatA, TatB and TatC subunits, and a separate TatA complex, containing only TatA subunits. Substrates initially bind to the TatABC complex, which probably triggers association of the separate TatA complex to form the active translocon.

Its subcellular location is the cell inner membrane. Functionally, part of the twin-arginine translocation (Tat) system that transports large folded proteins containing a characteristic twin-arginine motif in their signal peptide across membranes. Together with TatB, TatC is part of a receptor directly interacting with Tat signal peptides. The protein is Sec-independent protein translocase protein TatC of Halothiobacillus neapolitanus (strain ATCC 23641 / c2) (Thiobacillus neapolitanus).